We begin with the raw amino-acid sequence, 945 residues long: Leucine--tRNA ligase (945 aa).

Positions 43 to 53 (PYPNGAVHIGH) match the 'HIGH' region motif. Positions 638–642 (KMSKS) match the 'KMSKS' region motif. Lys641 is a binding site for ATP.

It belongs to the class-I aminoacyl-tRNA synthetase family.

It is found in the cytoplasm. The enzyme catalyses tRNA(Leu) + L-leucine + ATP = L-leucyl-tRNA(Leu) + AMP + diphosphate. The chain is Leucine--tRNA ligase from Pyrobaculum islandicum (strain DSM 4184 / JCM 9189 / GEO3).